Reading from the N-terminus, the 152-residue chain is Spermine/spermidine N(1)-acetyltransferase (152 aa).

The 150-residue stretch at 3-152 (INIKAVTDDN…NGEKVMVKEL (150 aa)) folds into the N-acetyltransferase domain. Acetyl-CoA is bound by residues 82–84 (FFI), 89–95 (QGKGLGK), and 122–131 (NIHAIRLYQR). Tyr129 (proton donor) is an active-site residue.

The protein belongs to the acetyltransferase family.

It catalyses the reaction an alkane-alpha,omega-diamine + acetyl-CoA = an N-acetylalkane-alpha,omega-diamine + CoA + H(+). It carries out the reaction spermine + acetyl-CoA = N(1)-acetylspermine + CoA + H(+). The catalysed reaction is spermidine + acetyl-CoA = N(1)-acetylspermidine + CoA + H(+). It functions in the pathway amine and polyamine degradation; spermine degradation. Its pathway is amine and polyamine degradation; spermidine degradation. Its activity is regulated as follows. Putrescine and N(8)-acetylspermidine are competitive inhibitors of spermidine acetylation. Its function is as follows. Acetylates both spermidine and spermine at primary propyl amine moieties, with spermine being the preferred substrate. This is Spermine/spermidine N(1)-acetyltransferase (bltD) from Bacillus subtilis (strain 168).